Reading from the N-terminus, the 153-residue chain is Ribonuclease H (153 aa).

Positions 1-141 (MKHVHIFTDG…ADELARKGME (141 aa)) constitute an RNase H type-1 domain. The Mg(2+) site is built by D9, E47, D69, and D133. Residues 123-153 (HAGHPENERADELARKGMEPFKKARRADAVK) are disordered. A compositionally biased stretch (basic and acidic residues) spans 125–153 (GHPENERADELARKGMEPFKKARRADAVK).

The protein belongs to the RNase H family. In terms of assembly, monomer. Mg(2+) is required as a cofactor.

It localises to the cytoplasm. The enzyme catalyses Endonucleolytic cleavage to 5'-phosphomonoester.. In terms of biological role, endonuclease that specifically degrades the RNA of RNA-DNA hybrids. The protein is Ribonuclease H of Rhizobium meliloti (strain 1021) (Ensifer meliloti).